A 92-amino-acid chain; its full sequence is Small ribosomal subunit protein bS18B (92 aa).

Belongs to the bacterial ribosomal protein bS18 family. In terms of assembly, part of the 30S ribosomal subunit. Forms a tight heterodimer with protein bS6.

Functionally, binds as a heterodimer with protein bS6 to the central domain of the 16S rRNA, where it helps stabilize the platform of the 30S subunit. This Cupriavidus pinatubonensis (strain JMP 134 / LMG 1197) (Cupriavidus necator (strain JMP 134)) protein is Small ribosomal subunit protein bS18B.